Consider the following 320-residue polypeptide: Mitochondrial thiamine pyrophosphate carrier (320 aa).

Solcar repeat units lie at residues 13–106 (NTKF…LTEL), 116–202 (REFS…LKHL), and 214–309 (NENL…FCNV). A helical transmembrane segment spans residues 19 to 39 (AVAGSVSGLVTRALISPFDVI). At serine 51 the chain carries Phosphoserine. Helical transmembrane passes span 87 to 107 (ILSI…TELV), 122 to 142 (FVCG…VDVL), 173 to 193 (VFYK…GLQF), and 220 to 240 (LLCG…LDLF). The short motif at 241–246 (KKRLQV) is the Substrate recognition element. The helical transmembrane segment at 293–313 (ALSTGFMFFWYEFFCNVFHCM) threads the bilayer.

Belongs to the mitochondrial carrier (TC 2.A.29) family.

It is found in the mitochondrion membrane. It catalyses the reaction thiamine phosphate(out) + thiamine diphosphate(in) = thiamine phosphate(in) + thiamine diphosphate(out). Its function is as follows. Mitochondrial transporter mediating uptake of thiamine diphosphate into mitochondria. It is not clear if the antiporter activity is affected by the membrane potential or by the proton electrochemical gradient. This chain is Mitochondrial thiamine pyrophosphate carrier (SLC25A19), found in Pongo abelii (Sumatran orangutan).